The sequence spans 171 residues: Transcription factor E (171 aa).

Residues 5-91 (DNKAVRGYIQ…LWKLDLDNSV (87 aa)) enclose the HTH TFE/IIEalpha-type domain.

Belongs to the TFE family. Monomer. Interaction with RNA polymerase subunits RpoF and RpoE is necessary for Tfe stimulatory transcription activity. Able to interact with Tbp and RNA polymerase in the absence of DNA promoter. Interacts both with the preinitiation and elongation complexes.

In terms of biological role, transcription factor that plays a role in the activation of archaeal genes transcribed by RNA polymerase. Facilitates transcription initiation by enhancing TATA-box recognition by TATA-box-binding protein (Tbp), and transcription factor B (Tfb) and RNA polymerase recruitment. Not absolutely required for transcription in vitro, but particularly important in cases where Tbp or Tfb function is not optimal. It dynamically alters the nucleic acid-binding properties of RNA polymerases by stabilizing the initiation complex and destabilizing elongation complexes. Seems to translocate with the RNA polymerase following initiation and acts by binding to the non template strand of the transcription bubble in elongation complexes. The protein is Transcription factor E of Methanocella arvoryzae (strain DSM 22066 / NBRC 105507 / MRE50).